The sequence spans 98 residues: UPF0390 protein zgc136864 (98 aa).

A compositionally biased stretch (basic residues) spans 1-30 (MAQGKQKFKAQRPGGAKKHQNKPKGLKKGG). Disordered regions lie at residues 1–38 (MAQG…PKKA) and 63–98 (TQKA…GPSK). The span at 83–98 (KSGTAGAPKPAAGPSK) shows a compositional bias: low complexity.

The protein belongs to the UPF0390 family.

In Danio rerio (Zebrafish), this protein is UPF0390 protein zgc136864.